We begin with the raw amino-acid sequence, 1323 residues long: Traf2 and NCK-interacting protein kinase (1323 aa).

Positions 25–289 (FELVELVGNG…TEQLMKHPFI (265 aa)) constitute a Protein kinase domain. Residues 31-39 (VGNGTYGQV) and K54 contribute to the ATP site. The active-site Proton acceptor is D153. The residue at position 187 (T187) is a Phosphothreonine. Disordered stretches follow at residues 284-347 (MKHP…LPGE), 397-559 (EQKE…LRPV), and 571-838 (SQGP…NEQY). Residues 288–307 (FIRDQPNERQVRIQLKDHID) are compositionally biased toward basic and acidic residues. A mediates interaction with NEDD4 region spans residues 290 to 1010 (RDQPNERQVR…EIRKYKKRFN (721 aa)). The span at 317–335 (DETEYEYSGSEEEEEENDS) shows a compositional bias: acidic residues. A phosphoserine mark is found at S324 and S326. 3 stretches are compositionally biased toward basic and acidic residues: residues 397–470 (EQKE…ERDY), 477–494 (QRQE…HYKE), and 503–513 (AWAKEVEERSR). Phosphoserine occurs at positions 531 and 541. At T552 the chain carries Phosphothreonine. S571, S579, S581, and S611 each carry phosphoserine. A compositionally biased stretch (basic and acidic residues) spans 623 to 640 (RIEKFDRSSWLRQEEDIP). A phosphoserine mark is found at S649, S651, S659, S672, S678, S691, S735, S737, and S740. Over residues 691 to 726 (SSLQRTSSGSSSSSSTPSSQPSSQGGSQPGSQAGSS) the composition is skewed to low complexity. Basic and acidic residues-rich tracts occupy residues 746-760 (EPSK…DITR) and 772-790 (KELR…KKVT). Acidic residues predominate over residues 797–810 (EESESSEEEEEDGE). Phosphoserine is present on S922. Positions 939 to 960 (FVDPRVYQTSPTDEDEEDDESS) are disordered. Residues 950–959 (TDEDEEDDES) are compositionally biased toward acidic residues. Residues 1010–1297 (NSEILCAALW…KFLCERNDKV (288 aa)) form the CNH domain.

This sequence belongs to the protein kinase superfamily. STE Ser/Thr protein kinase family. STE20 subfamily. In terms of assembly, interacts (via the CNH domain) with RAP2A (GTP-bound form preferentially); the interaction is direct and required for the activation of TNIK by RAP2A. Interacts with NEDD4; recruits RAP2A to NEDD4. Interacts with TRAF2 and NCK. Interacts with TCF7L2/TCF4 and CTNNB1; the interaction is direct. Interacts with TANC1. Post-translationally, autophosphorylated. Autophosphorylation is activated by RAP2A and induces association to the cytoskeletal fraction.

It localises to the nucleus. Its subcellular location is the cytoplasm. The protein resides in the recycling endosome. The protein localises to the cytoskeleton. It carries out the reaction L-seryl-[protein] + ATP = O-phospho-L-seryl-[protein] + ADP + H(+). The enzyme catalyses L-threonyl-[protein] + ATP = O-phospho-L-threonyl-[protein] + ADP + H(+). Serine/threonine kinase that acts as an essential activator of the Wnt signaling pathway. Recruited to promoters of Wnt target genes and required to activate their expression. May act by phosphorylating TCF4/TCF7L2. Appears to act upstream of the JUN N-terminal pathway. May play a role in the response to environmental stress. Part of a signaling complex composed of NEDD4, RAP2A and TNIK which regulates neuronal dendrite extension and arborization during development. More generally, it may play a role in cytoskeletal rearrangements and regulate cell spreading. Phosphorylates SMAD1 on Thr-322. Activator of the Hippo signaling pathway which plays a pivotal role in organ size control and tumor suppression by restricting proliferation and promoting apoptosis. MAP4Ks act in parallel to and are partially redundant with STK3/MST2 and STK4/MST2 in the phosphorylation and activation of LATS1/2, and establish MAP4Ks as components of the expanded Hippo pathway. The sequence is that of Traf2 and NCK-interacting protein kinase (Tnik) from Mus musculus (Mouse).